A 146-amino-acid chain; its full sequence is Large ribosomal subunit protein uL15 (146 aa).

A disordered region spans residues 1–51; that stretch reads MKLHELQPAAGSRKVRNRVGRGTSSGNGKTAGRGQKGQKARSGGGVRLGFE. Gly residues-rich tracts occupy residues 23–35 and 42–51; these read TSSG…GRGQ and SGGGVRLGFE.

This sequence belongs to the universal ribosomal protein uL15 family. As to quaternary structure, part of the 50S ribosomal subunit.

In terms of biological role, binds to the 23S rRNA. The polypeptide is Large ribosomal subunit protein uL15 (Streptococcus gordonii (strain Challis / ATCC 35105 / BCRC 15272 / CH1 / DL1 / V288)).